The sequence spans 213 residues: 3-isopropylmalate dehydratase small subunit (213 aa).

Belongs to the LeuD family. LeuD type 1 subfamily. Heterodimer of LeuC and LeuD.

It carries out the reaction (2R,3S)-3-isopropylmalate = (2S)-2-isopropylmalate. It functions in the pathway amino-acid biosynthesis; L-leucine biosynthesis; L-leucine from 3-methyl-2-oxobutanoate: step 2/4. In terms of biological role, catalyzes the isomerization between 2-isopropylmalate and 3-isopropylmalate, via the formation of 2-isopropylmaleate. The chain is 3-isopropylmalate dehydratase small subunit from Pseudomonas savastanoi pv. phaseolicola (strain 1448A / Race 6) (Pseudomonas syringae pv. phaseolicola (strain 1448A / Race 6)).